The primary structure comprises 770 residues: tRNA(Met) cytidine acetyltransferase TmcA 2 (770 aa).

2 residues coordinate ATP: glutamine 209 and arginine 390. The N-acetyltransferase domain maps to 458–608; sequence MIMLDGIHHK…YPVVVIRPIS (151 aa). 533–535 provides a ligand contact to acetyl-CoA; that stretch reads IAV.

This sequence belongs to the TmcA family.

It localises to the cytoplasm. The enzyme catalyses cytidine(34) in elongator tRNA(Met) + acetyl-CoA + ATP + H2O = N(4)-acetylcytidine(34) in elongator tRNA(Met) + ADP + phosphate + CoA + H(+). It carries out the reaction a cytidine in RNA + acetyl-CoA + ATP + H2O = an N(4)-acetylcytidine in RNA + ADP + phosphate + CoA + H(+). It catalyses the reaction a cytidine in tRNA + acetyl-CoA + ATP + H2O = an N(4)-acetylcytidine in tRNA + ADP + phosphate + CoA + H(+). The catalysed reaction is a cytidine in mRNA + acetyl-CoA + ATP + H2O = an N(4)-acetylcytidine in mRNA + ADP + phosphate + CoA + H(+). Functionally, catalyzes the formation of N(4)-acetylcytidine (ac(4)C) at the wobble position of tRNA(Met), by using acetyl-CoA as an acetyl donor and ATP (or GTP). In terms of biological role, catalyzes the formation of 41 N(4)-acetylcytidine (ac(4)C) sites in RNA, almost always on the middle C of a CCG motif. Modifications are found mostly in tRNA, with small amounts found in rRNA and mRNA. The protein is tRNA(Met) cytidine acetyltransferase TmcA 2 of Saccharolobus solfataricus (strain ATCC 35092 / DSM 1617 / JCM 11322 / P2) (Sulfolobus solfataricus).